A 283-amino-acid chain; its full sequence is Phosphate import ATP-binding protein PstB 2 (283 aa).

The region spanning 36–278 is the ABC transporter domain; that stretch reads LQVKQFNFYY…PKKKQTEDYI (243 aa). An ATP-binding site is contributed by 69–76; that stretch reads GPSGCGKS.

Belongs to the ABC transporter superfamily. Phosphate importer (TC 3.A.1.7) family. In terms of assembly, the complex is composed of two ATP-binding proteins (PstB), two transmembrane proteins (PstC and PstA) and a solute-binding protein (PstS).

The protein localises to the cell inner membrane. It catalyses the reaction phosphate(out) + ATP + H2O = ADP + 2 phosphate(in) + H(+). Functionally, part of the ABC transporter complex PstSACB involved in phosphate import. Responsible for energy coupling to the transport system. The chain is Phosphate import ATP-binding protein PstB 2 from Nitrosococcus oceani (strain ATCC 19707 / BCRC 17464 / JCM 30415 / NCIMB 11848 / C-107).